The following is a 98-amino-acid chain: Cobalt transport protein CbiN (98 aa).

The next 2 helical transmembrane spans lie at 6-26 and 68-88; these read VLMI…YSGL and SLLF…FFGY.

The protein belongs to the CbiN family. Forms an energy-coupling factor (ECF) transporter complex composed of an ATP-binding protein (A component, CbiO), a transmembrane protein (T component, CbiQ) and 2 possible substrate-capture proteins (S components, CbiM and CbiN) of unknown stoichimetry.

The protein resides in the cell membrane. It participates in cofactor biosynthesis; adenosylcobalamin biosynthesis. Its function is as follows. Part of the energy-coupling factor (ECF) transporter complex CbiMNOQ involved in cobalt import. The chain is Cobalt transport protein CbiN from Methanococcus maripaludis (strain DSM 14266 / JCM 13030 / NBRC 101832 / S2 / LL).